Here is a 146-residue protein sequence, read N- to C-terminus: Cytochrome c oxidase subunit 5A, mitochondrial (146 aa).

A mitochondrion-targeting transit peptide spans 1–37; it reads MLAAALRRCTAAAAARGLLHPASAPSPAAAVCSIRCY. The SIFI-degron signature appears at 2–16; it reads LAAALRRCTAAAAAR. Lysine 83 and lysine 109 each carry N6-acetyllysine. Residue threonine 137 is modified to Phosphothreonine.

It belongs to the cytochrome c oxidase subunit 5A family. As to quaternary structure, component of the cytochrome c oxidase (complex IV, CIV), a multisubunit enzyme composed of 14 subunits. The complex is composed of a catalytic core of 3 subunits MT-CO1, MT-CO2 and MT-CO3, encoded in the mitochondrial DNA, and 11 supernumerary subunits COX4I, COX5A, COX5B, COX6A, COX6B, COX6C, COX7A, COX7B, COX7C, COX8 and NDUFA4, which are encoded in the nuclear genome. The complex exists as a monomer or a dimer and forms supercomplexes (SCs) in the inner mitochondrial membrane with NADH-ubiquinone oxidoreductase (complex I, CI) and ubiquinol-cytochrome c oxidoreductase (cytochrome b-c1 complex, complex III, CIII), resulting in different assemblies (supercomplex SCI(1)III(2)IV(1) and megacomplex MCI(2)III(2)IV(2)). Interacts with AFG1L. Interacts with RAB5IF. In response to mitochondrial stress, the precursor protein is ubiquitinated by the SIFI complex in the cytoplasm before mitochondrial import, leading to its degradation. Within the SIFI complex, UBR4 initiates ubiquitin chain that are further elongated or branched by KCMF1.

The protein resides in the mitochondrion inner membrane. The protein operates within energy metabolism; oxidative phosphorylation. Functionally, component of the cytochrome c oxidase, the last enzyme in the mitochondrial electron transport chain which drives oxidative phosphorylation. The respiratory chain contains 3 multisubunit complexes succinate dehydrogenase (complex II, CII), ubiquinol-cytochrome c oxidoreductase (cytochrome b-c1 complex, complex III, CIII) and cytochrome c oxidase (complex IV, CIV), that cooperate to transfer electrons derived from NADH and succinate to molecular oxygen, creating an electrochemical gradient over the inner membrane that drives transmembrane transport and the ATP synthase. Cytochrome c oxidase is the component of the respiratory chain that catalyzes the reduction of oxygen to water. Electrons originating from reduced cytochrome c in the intermembrane space (IMS) are transferred via the dinuclear copper A center (CU(A)) of subunit 2 and heme A of subunit 1 to the active site in subunit 1, a binuclear center (BNC) formed by heme A3 and copper B (CU(B)). The BNC reduces molecular oxygen to 2 water molecules using 4 electrons from cytochrome c in the IMS and 4 protons from the mitochondrial matrix. This is Cytochrome c oxidase subunit 5A, mitochondrial (Cox5a) from Mus musculus (Mouse).